Consider the following 458-residue polypeptide: MSKDKLWGGRFTQPTDAFVEEFTASIQFDKRLYHQDIRGSIAHARMLGKQGIIPQADVEAIVEGLQQILLQIEEGSFDFSISLEDIHMNIESRLSARIGEAGKRLHTGRSRNDQVALDIRLYLRDEIVEITSYIDLLIDALLTQAEENVDVVMPGFTHLQTAQPILFAHHMLAYVEMFKRDSGRMEDCLKRVNVLPLGAGALAGTTFPIDRDYVAEQLGFPAITRNSLDSVSDRDFALEFISASSILMMHLSRLSEELILWSTSQFKFIELSDGFCTGSSIMPQKKNPDVPELVRGKTGRVYGNLMALLTVMKSLPLAYNKDMQEDKEPLFDTIDTVKGSLKVFSDMIREMSIYPEAMGRAAGQGFSTATDVADYLVRKGVAFRDAHEAVGKAVAYCVENEMELTDLTLTEWELFSPRFEQDIFEAITVDACIDARNVPGGTAREQVKGEIARCRKGK.

It belongs to the lyase 1 family. Argininosuccinate lyase subfamily.

Its subcellular location is the cytoplasm. The catalysed reaction is 2-(N(omega)-L-arginino)succinate = fumarate + L-arginine. It functions in the pathway amino-acid biosynthesis; L-arginine biosynthesis; L-arginine from L-ornithine and carbamoyl phosphate: step 3/3. In Pelobacter propionicus (strain DSM 2379 / NBRC 103807 / OttBd1), this protein is Argininosuccinate lyase.